The following is a 475-amino-acid chain: Actin-related protein 10 (475 aa).

This sequence belongs to the actin family.

Its subcellular location is the cytoplasm. It is found in the cytoskeleton. This Dictyostelium discoideum (Social amoeba) protein is Actin-related protein 10.